The chain runs to 592 residues: Craniofacial development protein 2 (592 aa).

Residues 1-16 (MEEFDSKDISTSKDED) show a composition bias toward basic and acidic residues. 2 disordered regions span residues 1–225 (MEEF…KGQS) and 499–592 (VTNE…DCNN). A compositionally biased stretch (acidic residues) spans 25–42 (HEDDINELVKEDEVDGEE). 2 stretches are compositionally biased toward basic and acidic residues: residues 78–108 (SRES…RQEE) and 147–162 (KVEE…EVKL). Polar residues predominate over residues 175–184 (LTQQGRLSGR). 4 stretches are compositionally biased toward basic and acidic residues: residues 185–207 (TSED…RRAD), 508–523 (EEAK…EKPE), 552–562 (SVFKQDEKDKP), and 580–592 (EKCD…DCNN). Residues 499–578 (VTNEEDATNE…SVPSLPAGSG (80 aa)) form a hydrophilic region.

Post-translationally, phosphorylated by CK2 (casein kinase II) in vitro. In terms of tissue distribution, expressed in liver and lung with higher expression in brain.

The protein localises to the cytoplasm. It is found in the nucleus. The sequence is that of Craniofacial development protein 2 (CFDP2) from Bos taurus (Bovine).